The following is a 260-amino-acid chain: Proliferating cell nuclear antigen (260 aa).

A DNA-binding region spans residues 61–80 (RCDRNLSMGMNLGSMAKILK).

This sequence belongs to the PCNA family. In terms of assembly, homotrimer. Forms a complex with activator 1 heteropentamer in the presence of ATP. Interacts with E2f. Interacts with the catalytic subunits of two DNA polymerase complexes: PolD1 from the delta complex and PolE1/DNApol-epsilon255 from the epsilon complex. In terms of tissue distribution, expressed at high levels in adult ovary.

The protein localises to the nucleus. It is found in the chromosome. Its subcellular location is the cytoplasm. Functionally, likely to be an auxiliary protein of DNA polymerase delta complex and is probably involved in the control of DNA replication and repair by increasing the polymerase's processibility. The polypeptide is Proliferating cell nuclear antigen (Drosophila melanogaster (Fruit fly)).